A 362-amino-acid chain; its full sequence is Protein RecA (362 aa).

ATP is bound at residue 65-72 (GPESSGKT). Positions 323 to 362 (RVANGMEPLNEKSTKETADDKASGKTGENKQETIEEASKE) are disordered. Residues 331 to 362 (LNEKSTKETADDKASGKTGENKQETIEEASKE) show a composition bias toward basic and acidic residues.

It belongs to the RecA family.

The protein localises to the cytoplasm. Its function is as follows. Can catalyze the hydrolysis of ATP in the presence of single-stranded DNA, the ATP-dependent uptake of single-stranded DNA by duplex DNA, and the ATP-dependent hybridization of homologous single-stranded DNAs. It interacts with LexA causing its activation and leading to its autocatalytic cleavage. This Limosilactobacillus reuteri (strain DSM 20016) (Lactobacillus reuteri) protein is Protein RecA.